The following is a 336-amino-acid chain: UPF0324 membrane protein BT_1919 (336 aa).

8 helical membrane passes run 2-19 (LHGV…FYIG), 23-45 (FVRS…YANS), 85-107 (IGLP…GIYL), 117-134 (IALL…AAIL), 147-169 (TAVS…PFLY), 210-232 (AIIV…TYLV), 253-275 (WFAI…AQLV), and 310-332 (FVLA…KYLT).

This sequence belongs to the UPF0324 family.

Its subcellular location is the cell membrane. This chain is UPF0324 membrane protein BT_1919, found in Bacteroides thetaiotaomicron (strain ATCC 29148 / DSM 2079 / JCM 5827 / CCUG 10774 / NCTC 10582 / VPI-5482 / E50).